Here is a 412-residue protein sequence, read N- to C-terminus: Putative competence-damage inducible protein (412 aa).

The protein belongs to the CinA family.

The polypeptide is Putative competence-damage inducible protein (Caldanaerobacter subterraneus subsp. tengcongensis (strain DSM 15242 / JCM 11007 / NBRC 100824 / MB4) (Thermoanaerobacter tengcongensis)).